The primary structure comprises 395 residues: Pyruvate synthase subunit PorA (395 aa).

Heterotetramer of one alpha, one beta, one delta and one gamma chain.

The catalysed reaction is 2 oxidized [2Fe-2S]-[ferredoxin] + pyruvate + CoA = 2 reduced [2Fe-2S]-[ferredoxin] + acetyl-CoA + CO2 + H(+). This Pyrococcus abyssi (strain GE5 / Orsay) protein is Pyruvate synthase subunit PorA (porA).